The chain runs to 530 residues: Glucocorticoid modulatory element-binding protein 2 (530 aa).

The SAND domain occupies 81–163 (EEGENLEAEI…RKIMDSGELD (83 aa)). C110 serves as a coordination point for Zn(2+). DNA is bound by residues K136, K140, K143, and R154. Residue K155 forms a Glycyl lysine isopeptide (Lys-Gly) (interchain with G-Cter in SUMO1); alternate linkage. Residue K155 forms a Glycyl lysine isopeptide (Lys-Gly) (interchain with G-Cter in SUMO2); alternate linkage. Zn(2+)-binding residues include H167, C171, and C175. Positions 304–348 (QMDRSREQYARDLAALEQQCDEHRRRAKELKHKSQHLSNVLMTLT) form a coiled coil. A Phosphoserine modification is found at S373.

As to quaternary structure, homodimer, and heterodimer of GMEB1 and GMEB2. GMEB1 and GMEB2 form the parvovirus initiator complex (PIF). Interacts with the glucocorticoid receptor (NR3C1). May interact with CREB-binding protein (CBP). As to expression, expressed in peripheral blood lymphocytes and fetal liver. Expressed preferentially in reproductive and/or developmentally important cells, such as testis, placenta, bone marrow and fetal tissues.

It localises to the nucleus. Its subcellular location is the cytoplasm. Functionally, trans-acting factor that binds to glucocorticoid modulatory elements (GME) present in the TAT (tyrosine aminotransferase) promoter and increases sensitivity to low concentrations of glucocorticoids. Also binds to the transferrin receptor promoter. Essential auxiliary factor for the replication of parvoviruses. In Homo sapiens (Human), this protein is Glucocorticoid modulatory element-binding protein 2 (GMEB2).